The chain runs to 187 residues: Elongation factor P (187 aa).

This sequence belongs to the elongation factor P family.

The protein resides in the cytoplasm. It functions in the pathway protein biosynthesis; polypeptide chain elongation. Functionally, involved in peptide bond synthesis. Stimulates efficient translation and peptide-bond synthesis on native or reconstituted 70S ribosomes in vitro. Probably functions indirectly by altering the affinity of the ribosome for aminoacyl-tRNA, thus increasing their reactivity as acceptors for peptidyl transferase. In Flavobacterium psychrophilum (strain ATCC 49511 / DSM 21280 / CIP 103535 / JIP02/86), this protein is Elongation factor P.